We begin with the raw amino-acid sequence, 339 residues long: Ketol-acid reductoisomerase (NADP(+)) (339 aa).

The KARI N-terminal Rossmann domain occupies 1–182 (MRVYYDRDAD…GGGRAGIIET (182 aa)). Residues 24-27 (YGSQ), R48, S51, T53, and 83-86 (DELQ) contribute to the NADP(+) site. The active site involves H108. G134 contributes to the NADP(+) binding site. Residues 183-328 (TFKEECETDL…AKLRGMMPWI (146 aa)) enclose the KARI C-terminal knotted domain. Mg(2+) contacts are provided by D191, E195, E227, and E231. S252 is a binding site for substrate.

Belongs to the ketol-acid reductoisomerase family. It depends on Mg(2+) as a cofactor.

The catalysed reaction is (2R)-2,3-dihydroxy-3-methylbutanoate + NADP(+) = (2S)-2-acetolactate + NADPH + H(+). It carries out the reaction (2R,3R)-2,3-dihydroxy-3-methylpentanoate + NADP(+) = (S)-2-ethyl-2-hydroxy-3-oxobutanoate + NADPH + H(+). Its pathway is amino-acid biosynthesis; L-isoleucine biosynthesis; L-isoleucine from 2-oxobutanoate: step 2/4. The protein operates within amino-acid biosynthesis; L-valine biosynthesis; L-valine from pyruvate: step 2/4. In terms of biological role, involved in the biosynthesis of branched-chain amino acids (BCAA). Catalyzes an alkyl-migration followed by a ketol-acid reduction of (S)-2-acetolactate (S2AL) to yield (R)-2,3-dihydroxy-isovalerate. In the isomerase reaction, S2AL is rearranged via a Mg-dependent methyl migration to produce 3-hydroxy-3-methyl-2-ketobutyrate (HMKB). In the reductase reaction, this 2-ketoacid undergoes a metal-dependent reduction by NADPH to yield (R)-2,3-dihydroxy-isovalerate. This Methylorubrum extorquens (strain CM4 / NCIMB 13688) (Methylobacterium extorquens) protein is Ketol-acid reductoisomerase (NADP(+)).